The chain runs to 79 residues: RNA-binding protein Hfq (79 aa).

The Sm domain occupies 10–69 (GPFLNALRKEHVPVSIYLVNGIKLQGNIESFDQYVVLLRNTVTQMVYKHAISTVVPARAV).

This sequence belongs to the Hfq family. Homohexamer.

In terms of biological role, RNA chaperone that binds small regulatory RNA (sRNAs) and mRNAs to facilitate mRNA translational regulation in response to envelope stress, environmental stress and changes in metabolite concentrations. Also binds with high specificity to tRNAs. The chain is RNA-binding protein Hfq from Cupriavidus necator (strain ATCC 17699 / DSM 428 / KCTC 22496 / NCIMB 10442 / H16 / Stanier 337) (Ralstonia eutropha).